Here is a 323-residue protein sequence, read N- to C-terminus: Malate dehydrogenase (323 aa).

Residues 20–25 (GAGRVG) and D44 contribute to the NAD(+) site. Substrate is bound by residues R93 and R99. Residues N106 and 129–131 (VTN) each bind NAD(+). Substrate contacts are provided by N131 and R162. Residue H186 is the Proton acceptor of the active site.

It belongs to the LDH/MDH superfamily. MDH type 3 family.

The catalysed reaction is (S)-malate + NAD(+) = oxaloacetate + NADH + H(+). Functionally, catalyzes the reversible oxidation of malate to oxaloacetate. The chain is Malate dehydrogenase from Nostoc sp. (strain PCC 7120 / SAG 25.82 / UTEX 2576).